The chain runs to 68 residues: Stage III sporulation protein AC (68 aa).

A run of 2 helical transmembrane segments spans residues 5-25 (VNVIFQIAGVGIVVAFLHTIL) and 33-53 (YAQWVTLLGFIYILFMVATIV).

The protein resides in the cell membrane. This chain is Stage III sporulation protein AC (spoIIIAC), found in Bacillus subtilis (strain 168).